The sequence spans 533 residues: Probable bifunctional tRNA threonylcarbamoyladenosine biosynthesis protein (533 aa).

The segment at 1 to 328 is kae1; sequence MRILGIEGTA…FRPDAVTVTW (328 aa). Fe cation-binding residues include H112 and H116. L-threonylcarbamoyladenylate-binding positions include 133-137, D165, G178, E182, and N261; that span reads NASGA. Position 289 (D289) interacts with Fe cation. The Protein kinase domain maps to 339-533; that stretch reads PATLDKTPVR…RDIESRGRYH (195 aa). Residues 347–354 and K363 each bind ATP; that span reads VRGAEAIV. D452 functions as the Proton acceptor; for kinase activity in the catalytic mechanism.

This sequence in the N-terminal section; belongs to the KAE1 / TsaD family. In the C-terminal section; belongs to the protein kinase superfamily. Tyr protein kinase family. BUD32 subfamily. In terms of assembly, component of the KEOPS complex that consists of Kae1, Bud32, Cgi121 and Pcc1; the whole complex dimerizes. The cofactor is Fe(2+).

The protein resides in the cytoplasm. The catalysed reaction is L-seryl-[protein] + ATP = O-phospho-L-seryl-[protein] + ADP + H(+). It catalyses the reaction L-threonyl-[protein] + ATP = O-phospho-L-threonyl-[protein] + ADP + H(+). It carries out the reaction L-threonylcarbamoyladenylate + adenosine(37) in tRNA = N(6)-L-threonylcarbamoyladenosine(37) in tRNA + AMP + H(+). Required for the formation of a threonylcarbamoyl group on adenosine at position 37 (t(6)A37) in tRNAs that read codons beginning with adenine. Is a component of the KEOPS complex that is probably involved in the transfer of the threonylcarbamoyl moiety of threonylcarbamoyl-AMP (TC-AMP) to the N6 group of A37. The Kae1 domain likely plays a direct catalytic role in this reaction. The Bud32 domain probably displays kinase activity that regulates Kae1 function. This chain is Probable bifunctional tRNA threonylcarbamoyladenosine biosynthesis protein, found in Haloquadratum walsbyi (strain DSM 16790 / HBSQ001).